Consider the following 282-residue polypeptide: Tetraspanin-6 (282 aa).

Topologically, residues 1 to 7 (MYRFSNT) are cytoplasmic. Residues 8–28 (VIGVLNLLTLLASIPIIGTAL) traverse the membrane as a helical segment. Topologically, residues 29 to 44 (YKARSSTTCENFLQTP) are extracellular. Residues 45–65 (LLVIGFIILIVSLAGFIGACF) traverse the membrane as a helical segment. The Cytoplasmic portion of the chain corresponds to 66-74 (NVAWALWVY). The chain crosses the membrane as a helical span at residues 75–95 (LVVMIFLIATLMGLTLFGLVV). At 96-220 (TSQGGGVEVP…EIRLDWRKLS (125 aa)) the chain is on the extracellular side. Residues 221 to 241 (VVNILVLVLLIAVYAAGCCAF) form a helical membrane-spanning segment. Residues 242 to 282 (HNTRHAAHPYHPSDDNRMTRVRPRWDYYWWRWWHEKKEQLY) lie on the Cytoplasmic side of the membrane.

This sequence belongs to the tetraspanin (TM4SF) family.

It is found in the membrane. Functionally, may be involved in the regulation of cell differentiation. The sequence is that of Tetraspanin-6 (TET6) from Arabidopsis thaliana (Mouse-ear cress).